The chain runs to 66 residues: Small ribosomal subunit protein bS21 (66 aa).

This sequence belongs to the bacterial ribosomal protein bS21 family.

The protein is Small ribosomal subunit protein bS21 of Solidesulfovibrio magneticus (strain ATCC 700980 / DSM 13731 / RS-1) (Desulfovibrio magneticus).